A 68-amino-acid chain; its full sequence is Agnoprotein (68 aa).

Over 1–24 (MVLRQLSRQASVKVGKTWTGTKRR) the chain is Cytoplasmic. Phosphoserine; by host is present on residues serine 7 and serine 11. Threonine 21 is modified (phosphothreonine; by host). The chain crosses the membrane as a helical; Signal-anchor for type II membrane protein span at residues 25–41 (AQRIFIFILELLLDFCR). The Extracellular portion of the chain corresponds to 42–68 (GEDSVDGKKKKDSLTDKTETVTEKKES). The segment at 44-68 (DSVDGKKKKDSLTDKTETVTEKKES) is disordered.

It belongs to the polyomavirus agnoprotein family. As to quaternary structure, homooligomer. Interacts with VP1. Interacts with large T antigen; this interaction may impact upon the activity of T-antigen on the control of viral gene transcription and replication. Interacts with small t antigen. Interacts with host CBX5; this interaction induces the dissociation of CBX5 from LBR, resulting in destabilization of the nuclear envelope. In terms of processing, phosphorylated by host PKC. Phosphorylation alters the stability and may also have an impact on the subcellular location.

It is found in the host cytoplasm. The protein localises to the host nucleus membrane. It localises to the host rough endoplasmic reticulum membrane. Its subcellular location is the host cell membrane. Alters the structure of the nuclear envelope by interacting with host CBX5 and disrupting CBX5 association with LBR. Involved in the perinuclear-nuclear localization of the capsid protein VP1 during virion assembly and maturation. Plays an important role in the release of progeny virions from infected cells and in viral propagation, probably by acting as a viral ionic channel in the host plasma membrane. Allows influx of extracellular calcium ions in the host cell. May contribute to viral genome transcription and translation of viral late proteins. This is Agnoprotein from Simian virus 12 (strain wt100) (SV-12).